We begin with the raw amino-acid sequence, 151 residues long: Endoribonuclease YbeY (151 aa).

Residues His113, His117, and His123 each coordinate Zn(2+).

It belongs to the endoribonuclease YbeY family. Zn(2+) is required as a cofactor.

It localises to the cytoplasm. Single strand-specific metallo-endoribonuclease involved in late-stage 70S ribosome quality control and in maturation of the 3' terminus of the 16S rRNA. In Polaromonas naphthalenivorans (strain CJ2), this protein is Endoribonuclease YbeY.